We begin with the raw amino-acid sequence, 405 residues long: Argininosuccinate synthase (405 aa).

Residues 10-18 (AYSGGLDTS) and A37 contribute to the ATP site. Residues Y88 and S93 each contribute to the L-citrulline site. Position 118 (G118) interacts with ATP. L-aspartate contacts are provided by T120, N124, and D125. N124 serves as a coordination point for L-citrulline. 5 residues coordinate L-citrulline: R128, S179, S188, E264, and Y276.

Belongs to the argininosuccinate synthase family. Type 1 subfamily. Homotetramer.

It localises to the cytoplasm. It carries out the reaction L-citrulline + L-aspartate + ATP = 2-(N(omega)-L-arginino)succinate + AMP + diphosphate + H(+). It functions in the pathway amino-acid biosynthesis; L-arginine biosynthesis; L-arginine from L-ornithine and carbamoyl phosphate: step 2/3. The polypeptide is Argininosuccinate synthase (Pseudomonas fluorescens (strain ATCC BAA-477 / NRRL B-23932 / Pf-5)).